Here is a 154-residue protein sequence, read N- to C-terminus: Peptide deformylase (154 aa).

2 residues coordinate Fe cation: C90 and H132. Residue E133 is part of the active site. A Fe cation-binding site is contributed by H136.

It belongs to the polypeptide deformylase family. Requires Fe(2+) as cofactor.

It carries out the reaction N-terminal N-formyl-L-methionyl-[peptide] + H2O = N-terminal L-methionyl-[peptide] + formate. Removes the formyl group from the N-terminal Met of newly synthesized proteins. Requires at least a dipeptide for an efficient rate of reaction. N-terminal L-methionine is a prerequisite for activity but the enzyme has broad specificity at other positions. This is Peptide deformylase from Desulforudis audaxviator (strain MP104C).